The following is an 82-amino-acid chain: Small ribosomal subunit protein bS16 (82 aa).

It belongs to the bacterial ribosomal protein bS16 family.

This Synechocystis sp. (strain ATCC 27184 / PCC 6803 / Kazusa) protein is Small ribosomal subunit protein bS16.